Consider the following 212-residue polypeptide: Uridine kinase (212 aa).

Residue Gly-13 to Ser-20 participates in ATP binding.

The protein belongs to the uridine kinase family.

The protein localises to the cytoplasm. It catalyses the reaction uridine + ATP = UMP + ADP + H(+). The enzyme catalyses cytidine + ATP = CMP + ADP + H(+). It participates in pyrimidine metabolism; CTP biosynthesis via salvage pathway; CTP from cytidine: step 1/3. It functions in the pathway pyrimidine metabolism; UMP biosynthesis via salvage pathway; UMP from uridine: step 1/1. The chain is Uridine kinase from Shewanella piezotolerans (strain WP3 / JCM 13877).